The sequence spans 788 residues: 5-methyltetrahydropteroyltriglutamate--homocysteine methyltransferase (788 aa).

Residues R24–K27 and K140 each bind 5-methyltetrahydropteroyltri-L-glutamate. L-homocysteine is bound by residues I463–S465 and E516. L-methionine contacts are provided by residues I463–S465 and E516. 5-methyltetrahydropteroyltri-L-glutamate is bound by residues R547–C548 and W593. L-homocysteine is bound at residue D631. Position 631 (D631) interacts with L-methionine. E637 contributes to the 5-methyltetrahydropteroyltri-L-glutamate binding site. H673, C675, and E697 together coordinate Zn(2+). The active-site Proton donor is H726. C758 is a binding site for Zn(2+).

Belongs to the vitamin-B12 independent methionine synthase family. Zn(2+) is required as a cofactor.

It carries out the reaction 5-methyltetrahydropteroyltri-L-glutamate + L-homocysteine = tetrahydropteroyltri-L-glutamate + L-methionine. The protein operates within amino-acid biosynthesis; L-methionine biosynthesis via de novo pathway; L-methionine from L-homocysteine (MetE route): step 1/1. Functionally, catalyzes the transfer of a methyl group from 5-methyltetrahydrofolate to homocysteine resulting in methionine formation. The protein is 5-methyltetrahydropteroyltriglutamate--homocysteine methyltransferase of Rhodopseudomonas palustris (strain TIE-1).